Here is a 361-residue protein sequence, read N- to C-terminus: Mitogen-activated protein kinase 14 (361 aa).

Positions 32 to 316 (YVPIKPIGRG…VSDALLHPYM (285 aa)) constitute a Protein kinase domain. ATP contacts are provided by residues 38 to 46 (IGRGAYGVV) and lysine 61. Aspartate 158 functions as the Proton acceptor in the catalytic mechanism. The residue at position 188 (threonine 188) is a Phosphothreonine. Residues 188-190 (TEY) carry the TXY motif. Position 190 is a phosphotyrosine (tyrosine 190). Threonine 193 bears the Phosphothreonine mark.

The protein belongs to the protein kinase superfamily. CMGC Ser/Thr protein kinase family. MAP kinase subfamily. Interacts with MKK3. Dually phosphorylated on Thr-188 and Tyr-190, which activates the enzyme.

It carries out the reaction L-seryl-[protein] + ATP = O-phospho-L-seryl-[protein] + ADP + H(+). The catalysed reaction is L-threonyl-[protein] + ATP = O-phospho-L-threonyl-[protein] + ADP + H(+). Its activity is regulated as follows. Activated by threonine and tyrosine phosphorylation. The sequence is that of Mitogen-activated protein kinase 14 (MPK14) from Arabidopsis thaliana (Mouse-ear cress).